The following is a 218-amino-acid chain: Holliday junction branch migration complex subunit RuvA (218 aa).

Positions 1–64 (MIGKITGRLE…EDVMQLFGFT (64 aa)) are domain I. Residues 65 to 143 (TLTEKEWHRL…SVMGMSDTQA (79 aa)) are domain II. Positions 144–164 (TVAAQSSDAVIETRAAPSPVV) are flexible linker. Residues 165–218 (QNPSAQAEALSALSNLGYAPGDAAAAVAQAAGELPDAETPDLIRAALKRLAPKG) form a domain III region.

Belongs to the RuvA family. As to quaternary structure, homotetramer. Forms an RuvA(8)-RuvB(12)-Holliday junction (HJ) complex. HJ DNA is sandwiched between 2 RuvA tetramers; dsDNA enters through RuvA and exits via RuvB. An RuvB hexamer assembles on each DNA strand where it exits the tetramer. Each RuvB hexamer is contacted by two RuvA subunits (via domain III) on 2 adjacent RuvB subunits; this complex drives branch migration. In the full resolvosome a probable DNA-RuvA(4)-RuvB(12)-RuvC(2) complex forms which resolves the HJ.

It is found in the cytoplasm. In terms of biological role, the RuvA-RuvB-RuvC complex processes Holliday junction (HJ) DNA during genetic recombination and DNA repair, while the RuvA-RuvB complex plays an important role in the rescue of blocked DNA replication forks via replication fork reversal (RFR). RuvA specifically binds to HJ cruciform DNA, conferring on it an open structure. The RuvB hexamer acts as an ATP-dependent pump, pulling dsDNA into and through the RuvAB complex. HJ branch migration allows RuvC to scan DNA until it finds its consensus sequence, where it cleaves and resolves the cruciform DNA. In Roseobacter denitrificans (strain ATCC 33942 / OCh 114) (Erythrobacter sp. (strain OCh 114)), this protein is Holliday junction branch migration complex subunit RuvA.